Reading from the N-terminus, the 201-residue chain is Lipopolysaccharide core heptose(II)-phosphate phosphatase (201 aa).

Positions 1–33 (MLAFTLRFIKNKRYFAILAGALVIIAGLASQHA) are cleaved as a signal peptide.

The protein belongs to the phosphoglycerate mutase family. Ais subfamily.

The protein localises to the periplasm. Its pathway is bacterial outer membrane biogenesis; lipopolysaccharide metabolism. Catalyzes the dephosphorylation of heptose(II) of the outer membrane lipopolysaccharide core. The chain is Lipopolysaccharide core heptose(II)-phosphate phosphatase from Salmonella typhi.